The chain runs to 274 residues: NH(3)-dependent NAD(+) synthetase (274 aa).

ATP is bound at residue glycine 46–serine 53. Aspartate 52 is a Mg(2+) binding site. A deamido-NAD(+)-binding site is contributed by arginine 140. ATP is bound at residue threonine 160. Residue glutamate 165 coordinates Mg(2+). The deamido-NAD(+) site is built by lysine 173 and aspartate 180. ATP-binding residues include lysine 189 and threonine 211. Histidine 260–lysine 261 is a deamido-NAD(+) binding site.

Belongs to the NAD synthetase family. As to quaternary structure, homodimer.

It carries out the reaction deamido-NAD(+) + NH4(+) + ATP = AMP + diphosphate + NAD(+) + H(+). It functions in the pathway cofactor biosynthesis; NAD(+) biosynthesis; NAD(+) from deamido-NAD(+) (ammonia route): step 1/1. In terms of biological role, catalyzes the ATP-dependent amidation of deamido-NAD to form NAD. Uses ammonia as a nitrogen source. This chain is NH(3)-dependent NAD(+) synthetase, found in Listeria welshimeri serovar 6b (strain ATCC 35897 / DSM 20650 / CCUG 15529 / CIP 8149 / NCTC 11857 / SLCC 5334 / V8).